The sequence spans 264 residues: Teichoic acids export ATP-binding protein TagH (264 aa).

Positions 5 to 243 (VNIKNVTKEY…YEAFLNDFKK (239 aa)) constitute an ABC transporter domain. 57 to 64 (GINGSGKS) contributes to the ATP binding site.

It belongs to the ABC transporter superfamily. Teichoic acids exporter (TC 3.A.1.104.1) family. The complex is composed of two ATP-binding proteins (TagH) and two transmembrane proteins (TagG).

The protein localises to the cell membrane. The enzyme catalyses ATP + H2O + teichoic acidSide 1 = ADP + phosphate + teichoic acidSide 2.. Functionally, part of the ABC transporter complex TagGH involved in teichoic acids export. Responsible for energy coupling to the transport system. This Staphylococcus aureus (strain Mu50 / ATCC 700699) protein is Teichoic acids export ATP-binding protein TagH.